A 52-amino-acid polypeptide reads, in one-letter code: uncharacterized protein (52 aa).

The disordered stretch occupies residues 1-52; sequence MVNNDAKIGRREFYDRVESVRPKSPPRERPTYTYSNSRTVDGYSNRGPRADF. Residues 7–30 are compositionally biased toward basic and acidic residues; it reads KIGRREFYDRVESVRPKSPPRERP.

This is an uncharacterized protein from Dictyostelium discoideum (Social amoeba).